A 283-amino-acid chain; its full sequence is MKKLEYYLKDAFYYVLSDVKKGIVGGLLSSTSGAIGAIFGIILSILLIHNINPNDVVGLDNNILLTSLIVASFGFLIALIIGFILDGYYVRVMKTTVENYDVLPDWDDIAELLKRGFLYWIGNIILSIIFMIVPILFIIFGVFLIFLPLVGIVFIGIGFLLLFVSTIALLIYEGLAEVNYSVKGFSGFFEFKEIFRMINLNYIILLIIVGVIVIVINFVVQLPFILLKIFAISPARYSTFSSSETIVDVISAVISAFVGFYTAVFAKRAIALYYKDRVEELKK.

The next 6 membrane-spanning stretches (helical) occupy residues 28-48 (LSST…ILLI), 65-85 (LTSL…GFIL), 113-133 (LKRG…FMIV), 135-155 (ILFI…IVFI), 200-220 (LNYI…NFVV), and 246-266 (IVDV…AVFA).

The protein to M.jannaschii MJ0233.

It is found in the cell membrane. This is an uncharacterized protein from Methanocaldococcus jannaschii (strain ATCC 43067 / DSM 2661 / JAL-1 / JCM 10045 / NBRC 100440) (Methanococcus jannaschii).